Consider the following 1215-residue polypeptide: Pesticidal crystal protein Cry1Ka (1215 aa).

This sequence belongs to the delta endotoxin family.

In terms of biological role, promotes colloidosmotic lysis by binding to the midgut epithelial cells of insects. Selectively toxic to Artogeia rapae but not active on Plutella xylostella. The protein is Pesticidal crystal protein Cry1Ka (cry1Ka) of Bacillus thuringiensis subsp. morrisoni.